The primary structure comprises 395 residues: Protein SGT1 (395 aa).

Residue Lys32 forms a Glycyl lysine isopeptide (Lys-Gly) (interchain with G-Cter in ubiquitin) linkage. The tract at residues 137–175 is disordered; the sequence is KKNKKQKDSTNKHTIKPVESIENRGDNNSSHSPISPLKI. Phosphoserine is present on residues Ser168 and Ser171. The 96-residue stretch at 182–277 folds into the CS domain; the sequence is SPKFKIDWYQ…IDSTQWKKLE (96 aa). In terms of domain architecture, SGS spans 312-395; that stretch reads SYPSSSKKKI…PPEGMEPKHW (84 aa). The disordered stretch occupies residues 373–395; the sequence is DWEDVSKGTVKTSPPEGMEPKHW.

This sequence belongs to the SGT1 family. Interacts with SKP1/CBF3D. Part of SCF E3 ubiquitin ligase complexes containing SKP1, CDC53, HRT1 and some F-box proteins. Interacts with CIR1/CDC35.

Functionally, involved in ubiquitination and subsequent proteasomal degradation of target proteins. Required for both entry into S phase and kinetochore function. Also involved in cyclic AMP (cAMP) pathway, possibly by participating in the assembly or the conformational activation of specific multiprotein complexes. The polypeptide is Protein SGT1 (Saccharomyces cerevisiae (strain ATCC 204508 / S288c) (Baker's yeast)).